The following is a 496-amino-acid chain: Probable 26S proteasome non-ATPase regulatory subunit 3 (496 aa).

One can recognise a PCI domain in the interval 249–428 (ARFLYYLGRI…GYMRSKESTD (180 aa)). The interval 458-480 (RYPPKSYGKELESAEERREREQQ) is disordered. Over residues 464–480 (YGKELESAEERREREQQ) the composition is skewed to basic and acidic residues.

The protein belongs to the proteasome subunit S3 family. In terms of assembly, the 26S proteasome is composed of a core protease, known as the 20S proteasome, capped at one or both ends by the 19S regulatory complex (RC). The RC is composed of at least 18 different subunits in two subcomplexes, the base and the lid, which form the portions proximal and distal to the 20S proteolytic core, respectively.

Its function is as follows. Acts as a regulatory subunit of the 26 proteasome which is involved in the ATP-dependent degradation of ubiquitinated proteins. In Anopheles gambiae (African malaria mosquito), this protein is Probable 26S proteasome non-ATPase regulatory subunit 3 (Dox-A2).